Here is a 246-residue protein sequence, read N- to C-terminus: MSRGSGAGYDRHITIFSPEGRLFQVEYAFKAVKTAGITSIGVRGKDSVCVVTQKKVPDKLLDQSSVTHLFPITKYIGLVATGITADARSLVQQARNQAAEFRFTYGYEMPVDILAKWIADKSQVYTQHAYMRPLGVVAMVMGVDEENGPLLYKCDPAGHFYGHKATSAGMKEQEAVNFLEKKMKENPSFTFDETVQTAISALQSVLQEDFKATEIEVGVVRAENPEFRALTTEEIEEHLTAISERD.

It belongs to the peptidase T1A family. As to quaternary structure, component of the 20S core complex of the 26S proteasome. The 26S proteasome is composed of a core protease (CP), known as the 20S proteasome, capped at one or both ends by the 19S regulatory particle (RP/PA700). The 20S proteasome core is composed of 28 subunits that are arranged in four stacked rings, resulting in a barrel-shaped structure. The two end rings are each formed by seven alpha subunits, and the two central rings are each formed by seven beta subunits. The catalytic chamber with the active sites is on the inside of the barrel. In terms of tissue distribution, ubiquitous low levels, higher expression in siliques and flowers.

It is found in the cytoplasm. Its subcellular location is the nucleus. Functionally, the proteasome is a multicatalytic proteinase complex which is characterized by its ability to cleave peptides with Arg, Phe, Tyr, Leu, and Glu adjacent to the leaving group at neutral or slightly basic pH. The proteasome has an ATP-dependent proteolytic activity. The chain is Proteasome subunit alpha type-6-A (PAA1) from Arabidopsis thaliana (Mouse-ear cress).